Here is a 141-residue protein sequence, read N- to C-terminus: MKENDVVLKTVTKIVVFILLTFGFYLFLAGHNNPGGGFIGGLVFSSAFLLMFLAFDVKQVLVALPLDFRILMICGSLLSFLTAVVPMFFGKPFLYQTDAYVQLPLLGEVHLTTVTVFEAGIVLAVVGVVVTVMLSISGGRS.

The next 4 helical transmembrane spans lie at 10-30 (TVTK…FLAG), 35-55 (GGGF…FLAF), 70-90 (ILMI…MFFG), and 116-136 (VFEA…MLSI).

Belongs to the CPA3 antiporters (TC 2.A.63) subunit B family. As to quaternary structure, may form a heterooligomeric complex that consists of seven subunits: mnhA2, mnhB2, mnhC2, mnhD2, mnhE2, mnhF2 and mnhG2.

It localises to the cell membrane. The chain is Putative antiporter subunit mnhB2 (mnhB2) from Staphylococcus saprophyticus subsp. saprophyticus (strain ATCC 15305 / DSM 20229 / NCIMB 8711 / NCTC 7292 / S-41).